The primary structure comprises 1475 residues: Sterol 3-beta-glucosyltransferase (1475 aa).

Disordered stretches follow at residues 1–73 and 94–218; these read MPPP…PPMF and HDRF…EDDK. Positions 8 to 17 are enriched in low complexity; it reads LPLHGPAGAA. Residues 30 to 40 show a composition bias toward basic residues; the sequence is RVGKKLQKKRH. Residues 108–118 are compositionally biased toward basic and acidic residues; that stretch reads GPQRDSADRSH. A compositionally biased stretch (basic residues) spans 156–168; sequence EKHKRKISGHKLL. The GRAM 1 domain maps to 270 to 315; that stretch reads QDIFEFDQPEAVIEEYPCWLLQSVLLQGYMYITAKHICFYSYLPKK. A PH domain is found at 318–413; sequence EVVKSGYLSK…WVKSLQRVIF (96 aa). Disordered regions lie at residues 492–541, 594–636, and 653–715; these read ARLK…TTNK, SSPR…MEEP, and QILR…PVTP. Over residues 505–531 the composition is skewed to low complexity; that stretch reads QQQQQQHPMQPPMQASARSSMSGSRRA. 2 stretches are compositionally biased toward polar residues: residues 621 to 634 and 653 to 674; these read QQGS…SSME and QILR…SASR. The segment covering 675 to 686 has biased composition (basic and acidic residues); it reads TEVEKQQRRDPR. Positions 798 to 901 constitute a GRAM 2 domain; it reads RFRAHFALPE…RDDCAVTLLQ (104 aa). 11 residues coordinate UDP-alpha-D-glucose: Ser989, Arg990, Asp992, Ala1293, His1295, His1308, Ser1311, Gly1312, Thr1313, Asp1332, and Gln1333. The tract at residues 1413–1475 is disordered; it reads IQVEPDEDEE…RVSPSQQSVA (63 aa). Residues 1416-1425 are compositionally biased toward acidic residues; sequence EPDEDEESAE.

This sequence belongs to the glycosyltransferase 28 family.

It localises to the cytoplasm. It is found in the preautophagosomal structure membrane. The enzyme catalyses a sterol + UDP-alpha-D-glucose = a sterol 3-beta-D-glucoside + UDP + H(+). It carries out the reaction ergosterol + UDP-alpha-D-glucose = ergosteryl 3-beta-D-glucoside + UDP + H(+). Functionally, sterol glycosyltransferase responsible for the glycosylation of ergosterol to form ergosterol-glucoside. Mediates autophagic degradation of peroxisomes (pexophagy) and is involved in pathogenesis via peroxisome degradation inside appressoria that are developing into the host invasion stage. In Glomerella lagenarium (Anthracnose fungus), this protein is Sterol 3-beta-glucosyltransferase.